A 144-amino-acid chain; its full sequence is Superoxide dismutase [Mn], mitochondrial (144 aa).

The Mn(2+) site is built by histidine 10, histidine 58, and aspartate 143.

It belongs to the iron/manganese superoxide dismutase family. As to quaternary structure, homotetramer. Mn(2+) serves as cofactor.

The protein localises to the mitochondrion matrix. The enzyme catalyses 2 superoxide + 2 H(+) = H2O2 + O2. Its function is as follows. Destroys superoxide anion radicals which are normally produced within the cells and which are toxic to biological systems. In Palinurus vulgaris (European spiny lobster), this protein is Superoxide dismutase [Mn], mitochondrial.